Reading from the N-terminus, the 244-residue chain is tRNA pseudouridine synthase A (244 aa).

The active-site Nucleophile is the Asp-52. Residue Tyr-111 coordinates substrate.

The protein belongs to the tRNA pseudouridine synthase TruA family. As to quaternary structure, homodimer.

The catalysed reaction is uridine(38/39/40) in tRNA = pseudouridine(38/39/40) in tRNA. In terms of biological role, formation of pseudouridine at positions 38, 39 and 40 in the anticodon stem and loop of transfer RNAs. This Thermosipho africanus (strain TCF52B) protein is tRNA pseudouridine synthase A.